The primary structure comprises 132 residues: Small ribosomal subunit protein uS8 (132 aa).

This sequence belongs to the universal ribosomal protein uS8 family. In terms of assembly, part of the 30S ribosomal subunit. Contacts proteins S5 and S12.

In terms of biological role, one of the primary rRNA binding proteins, it binds directly to 16S rRNA central domain where it helps coordinate assembly of the platform of the 30S subunit. The sequence is that of Small ribosomal subunit protein uS8 from Bartonella bacilliformis (strain ATCC 35685 / KC583 / Herrer 020/F12,63).